The chain runs to 517 residues: Bifunctional purine biosynthesis protein PurH (517 aa).

Residues 1 to 146 (MAPIALLSVS…KNHAHVAVLT (146 aa)) form the MGS-like domain.

The protein belongs to the PurH family.

It carries out the reaction (6R)-10-formyltetrahydrofolate + 5-amino-1-(5-phospho-beta-D-ribosyl)imidazole-4-carboxamide = 5-formamido-1-(5-phospho-D-ribosyl)imidazole-4-carboxamide + (6S)-5,6,7,8-tetrahydrofolate. The enzyme catalyses IMP + H2O = 5-formamido-1-(5-phospho-D-ribosyl)imidazole-4-carboxamide. It functions in the pathway purine metabolism; IMP biosynthesis via de novo pathway; 5-formamido-1-(5-phospho-D-ribosyl)imidazole-4-carboxamide from 5-amino-1-(5-phospho-D-ribosyl)imidazole-4-carboxamide (10-formyl THF route): step 1/1. It participates in purine metabolism; IMP biosynthesis via de novo pathway; IMP from 5-formamido-1-(5-phospho-D-ribosyl)imidazole-4-carboxamide: step 1/1. In Prochlorococcus marinus (strain MIT 9313), this protein is Bifunctional purine biosynthesis protein PurH.